The primary structure comprises 472 residues: FAD-dependent monooxygenase dpmaE (472 aa).

A signal peptide spans 1-24 (MSQRQFKVIIIGGSVTGLTLAHSL). 3 residues coordinate FAD: Glu-35, Gly-49, and Arg-108. N-linked (GlcNAc...) asparagine glycans are attached at residues Asn-128 and Asn-179. FAD contacts are provided by Asp-305 and Ala-318. Residue Asn-369 is glycosylated (N-linked (GlcNAc...) asparagine). The chain crosses the membrane as a helical span at residues 440–460 (LLPLMFTLPLLYFGLSWIVGI).

This sequence belongs to the paxM FAD-dependent monooxygenase family. FAD serves as cofactor.

The protein localises to the membrane. It participates in secondary metabolite biosynthesis; terpenoid biosynthesis. FAD-dependent monooxygenase; part of the gene cluster that mediates the biosynthesis of the diterpenoid pyrones subglutinols A and B. The first step of the pathway is the synthesis of the alpha-pyrone moiety by the polyketide synthase dpmaA via condensation of one acetyl-CoA starter unit with 3 malonyl-CoA units and 2 methylations. The alpha-pyrone is then combined with geranylgeranyl pyrophosphate (GGPP) formed by the GGPP synthase dpmaD through the action of the prenyltransferase dpmaC to yield a linear alpha-pyrone diterpenoid. Subsequent steps in the diterpenoid pyrone biosynthetic pathway involve the decalin core formation, which is initiated by the epoxidation of the C10-C11 olefin by the FAD-dependent oxidoreductase dpmaE, and is followed by a cyclization cascade catalyzed by the terpene cyclase dpmaB. The dehydrogenase dpmaF is then involved in tetrahydrofuran (THF) ring formation at the C5 unit to complete the formation of subglutinols A and B. The sequence is that of FAD-dependent monooxygenase dpmaE from Metarhizium anisopliae (Entomophthora anisopliae).